A 371-amino-acid polypeptide reads, in one-letter code: GDP-perosamine synthase (371 aa).

Lysine 186 is modified (N6-(pyridoxal phosphate)lysine).

This sequence belongs to the DegT/DnrJ/EryC1 family. As to quaternary structure, homodimer. The cofactor is pyridoxal 5'-phosphate.

The catalysed reaction is GDP-alpha-D-perosamine + 2-oxoglutarate = GDP-4-dehydro-alpha-D-rhamnose + L-glutamate. The protein operates within bacterial outer membrane biogenesis; LPS O-antigen biosynthesis. Catalyzes the synthesis of GDP-perosamine from GDP-4-keto-6-deoxy-D-mannose and L-glutamate. Can use only L-glutamate as amino donor. In vitro, can also use GDP-4-keto-3,6-dideoxymannose to produce GDP-3-deoxyperosamine. Involved in the formation of S-LPS, which is required for attachment of the protein S-layer to the outer membrane surface. The sequence is that of GDP-perosamine synthase from Caulobacter vibrioides (strain ATCC 19089 / CIP 103742 / CB 15) (Caulobacter crescentus).